The following is a 258-amino-acid chain: Capsid protein (258 aa).

The Bipartite nuclear localization signal signature appears at 3–20 (KRPGDIIISTPGSKVRRR). The Nuclear localization signal signature appears at 41 to 55 (RKRAWVNRPMYRKPT). A zinc finger spans residues 69–86 (CEGPCKVQSFEQRDDVKH). Positions 102–123 (LTHRVGKRFCIKSIYILGKIWL) match the Nuclear export signal motif. The Bipartite nuclear localization signal motif lies at 202–249 (KRFYRLNHHVTYNHQEAGKYENHTENALLLYMACTHASNPVYATLKIR).

The protein belongs to the geminiviridae capsid protein family. Homomultimer. Binds to single-stranded and double-stranded viral DNA. Interacts (via nuclear localization signals) with host importin alpha-1a.

Its subcellular location is the virion. It is found in the host nucleus. Its function is as follows. Encapsidates the viral DNA into characteristic twinned ('geminate') particles. Binds the genomic viral ssDNA and shuttles it into and out of the cell nucleus. The CP of bipartite geminiviruses is not required for cell-to-cell or systemic movement. This is Capsid protein from African cassava mosaic virus (isolate West Kenyan 844) (ACMV).